A 414-amino-acid polypeptide reads, in one-letter code: NADH-dependent flavin oxidoreductase iccE (414 aa).

FMN contacts are provided by residues 25 to 28 (TAIA) and Gln-107. 188–191 (HASH) lines the substrate pocket. Residue 347–348 (AR) coordinates FMN.

It belongs to the NADH:flavin oxidoreductase/NADH oxidase family.

It catalyses the reaction 8-epi-ilicicolin H = ilicicolin H. Its pathway is mycotoxin biosynthesis. Functionally, NADH-dependent flavin oxidoreductase; part of the gene cluster that mediates the biosynthesis of ilicicolin H, a 4-hydroxy-2-pyridonealkaloid that has potent and broad antifungal activities by inhibiting the mitochondrial respiration chain. IccE acts as an epimerase and catalyzes the conversion of 8-epi-ilicicolin H into the final product ilicicolin H. The biosynthesis of ilicicolin H starts with formation of the tetramic acid by the hybrid PKS-NRPS synthetase iccA with the partnering trans-enoyl reductase iccB since iccA lacks a designated enoylreductase (ER) domain. The cytochrome P450 monooxygenase iccC then catalyzes the ring expansion of the tetramate to the acyclic 2-pyridone. The pericyclase iccD further converts the acyclic 2-pyridone into 8-epi-ilicicolin H. Finally, the epimerase iccE converts 8-epi-ilicicolin H into ilicicolin H via epimerization. IccA to iccE are sufficient for ilicicolin H biosynthesis and the roles of the remaining enzymes, iccF, iccG and iccH within the pathway have still to be determined. The protein is NADH-dependent flavin oxidoreductase iccE of Talaromyces variabilis (Penicillium variabile).